We begin with the raw amino-acid sequence, 327 residues long: Mitochondrial substrate carrier family protein A (327 aa).

The interval 1 to 36 (MVINNQNNNNQNNNQNNNNKNDNLNNSTTTTTTTAT) is disordered. Residues 1–48 (MVINNQNNNNQNNNQNNNNKNDNLNNSTTTTTTTATTTKSSTLFHSND) are Mitochondrial intermembrane-facing. 3 Solcar repeats span residues 43–132 (LFHS…FKRM), 140–224 (ISVI…IKEK), and 233–323 (PPLY…AITL). The helical transmembrane segment at 49 to 66 (FFSGLIAGIVSRTLTAPL) threads the bilayer. Residues 67-106 (ERIKILNQVEVILKDGTKYNRIIPAFKVIIKEEGIAGLFR) lie on the Mitochondrial matrix side of the membrane. A helical membrane pass occupies residues 107-127 (GNFVNIIKAGPQSAIRFYSYG). Residues 128-145 (AFKRMASEPDGSISVINR) lie on the Mitochondrial intermembrane side of the membrane. Residues 146–166 (MWAGASSGVVSVALTHPLDVI) form a helical membrane-spanning segment. At 167 to 192 (KTHITVIAPTAATIKNVTKGIYRDLG) the chain is on the mitochondrial matrix side. A helical transmembrane segment spans residues 193–213 (IIGFFRGLSAGILNIAPFAAL). Residues 214 to 238 (NFTFYETIKEKTQQYILKSPPLYAP) lie on the Mitochondrial intermembrane side of the membrane. The chain crosses the membrane as a helical span at residues 239-259 (SIYGAISGGLTMTILYPLDVV). The Mitochondrial matrix portion of the chain corresponds to 260 to 303 (KRRIMLQHFDRNQLPIYKNFIDAIIKITKTEGISALYKGIRPAY). Residues 304-324 (LKVIPTVSINFLIYEGAITLF) form a helical membrane-spanning segment. Topologically, residues 325–327 (EKK) are mitochondrial intermembrane.

This sequence belongs to the mitochondrial carrier (TC 2.A.29) family.

The protein localises to the mitochondrion inner membrane. Its function is as follows. Calcium-dependent mitochondrial solute carrier. Mitochondrial solute carriers shuttle metabolites, nucleotides, and cofactors through the mitochondrial inner membrane. This is Mitochondrial substrate carrier family protein A (mcfA) from Dictyostelium discoideum (Social amoeba).